The sequence spans 426 residues: UPF0229 protein YeaH (426 aa).

Over residues 78–92 the composition is skewed to basic and acidic residues; the sequence is GNDHFIQNDRIERPQ. Residues 78-108 are disordered; sequence GNDHFIQNDRIERPQDGGGSGSGNGQASQDG.

Belongs to the UPF0229 family.

The polypeptide is UPF0229 protein YeaH (Salmonella arizonae (strain ATCC BAA-731 / CDC346-86 / RSK2980)).